The chain runs to 209 residues: MQLSDRPLTAPGTAPRQATVSRRTGETDVQVFLNLDGTGRCQADTGIPFLDHMFDQIASHGLIDLEITAKGDLHIDDHHTNEDVGITFGLALAEALGDRKGIVRFGHFVAPLDEALVQVALDFSGRPHLTYGLTLPTERVGTYETQLVREFFVAIANNAKLTLHLRQLDGINSHHIIEATFKAFARSLRMATEVDPRRAGQIPSSKGVL.

Residues 1 to 23 form a disordered region; it reads MQLSDRPLTAPGTAPRQATVSRR.

This sequence belongs to the imidazoleglycerol-phosphate dehydratase family.

The protein localises to the cytoplasm. The catalysed reaction is D-erythro-1-(imidazol-4-yl)glycerol 3-phosphate = 3-(imidazol-4-yl)-2-oxopropyl phosphate + H2O. It participates in amino-acid biosynthesis; L-histidine biosynthesis; L-histidine from 5-phospho-alpha-D-ribose 1-diphosphate: step 6/9. The sequence is that of Imidazoleglycerol-phosphate dehydratase from Synechococcus elongatus (strain ATCC 33912 / PCC 7942 / FACHB-805) (Anacystis nidulans R2).